The following is a 531-amino-acid chain: Probable rhamnogalacturonate lyase A (531 aa).

Positions 1–20 are cleaved as a signal peptide; that stretch reads MLSKALFFSSLPLWAKVASA. Intrachain disulfides connect Cys-50/Cys-93 and Cys-184/Cys-193. Asn-351 is a glycosylation site (N-linked (GlcNAc...) asparagine).

The protein belongs to the polysaccharide lyase 4 family.

It localises to the secreted. The catalysed reaction is Endotype eliminative cleavage of L-alpha-rhamnopyranosyl-(1-&gt;4)-alpha-D-galactopyranosyluronic acid bonds of rhamnogalacturonan I domains in ramified hairy regions of pectin leaving L-rhamnopyranose at the reducing end and 4-deoxy-4,5-unsaturated D-galactopyranosyluronic acid at the non-reducing end.. Pectinolytic enzymes consist of four classes of enzymes: pectin lyase, polygalacturonase, pectin methylesterase and rhamnogalacturonase. Degrades the rhamnogalacturonan I (RG-I) backbone of pectin. This is Probable rhamnogalacturonate lyase A (rglA) from Aspergillus terreus (strain NIH 2624 / FGSC A1156).